The sequence spans 356 residues: uncharacterized protein (356 aa).

An N-terminal signal peptide occupies residues 1-21 (MHWSRFVGIFLVFSVFSLVNC). Residues 293–317 (RPETDYEGANLPNIPSKKGSANQPV) form a disordered region.

This is an uncharacterized protein from Acanthamoeba polyphaga mimivirus (APMV).